A 66-amino-acid polypeptide reads, in one-letter code: Large ribosomal subunit protein bL35 (66 aa).

Basic residues-rich tracts occupy residues 1-16 (MPKF…RFKR) and 23-45 (KRSH…RQLR). Residues 1 to 66 (MPKFKTHRAS…RIRQMLSGLK (66 aa)) form a disordered region.

Belongs to the bacterial ribosomal protein bL35 family.

The protein is Large ribosomal subunit protein bL35 of Latilactobacillus sakei subsp. sakei (strain 23K) (Lactobacillus sakei subsp. sakei).